We begin with the raw amino-acid sequence, 366 residues long: NAD(P)H-quinone oxidoreductase subunit 1, chloroplastic (366 aa).

7 consecutive transmembrane segments (helical) span residues 28 to 48 (IWLL…VLVI), 105 to 125 (IAVI…HLVL), 128 to 148 (LSIG…GLLM), 250 to 270 (SGIK…VSSL), 271 to 291 (FVTV…FIFI), 303 to 323 (IFGM…FLFI), and 346 to 366 (FLLP…LLSL).

It belongs to the complex I subunit 1 family. In terms of assembly, NDH is composed of at least 16 different subunits, 5 of which are encoded in the nucleus.

Its subcellular location is the plastid. It is found in the chloroplast thylakoid membrane. It catalyses the reaction a plastoquinone + NADH + (n+1) H(+)(in) = a plastoquinol + NAD(+) + n H(+)(out). The catalysed reaction is a plastoquinone + NADPH + (n+1) H(+)(in) = a plastoquinol + NADP(+) + n H(+)(out). In terms of biological role, NDH shuttles electrons from NAD(P)H:plastoquinone, via FMN and iron-sulfur (Fe-S) centers, to quinones in the photosynthetic chain and possibly in a chloroplast respiratory chain. The immediate electron acceptor for the enzyme in this species is believed to be plastoquinone. Couples the redox reaction to proton translocation, and thus conserves the redox energy in a proton gradient. This Nandina domestica (Heavenly bamboo) protein is NAD(P)H-quinone oxidoreductase subunit 1, chloroplastic.